Reading from the N-terminus, the 326-residue chain is Putative ribose-phosphate pyrophosphokinase 2 (326 aa).

ATP-binding positions include 43 to 45 and 102 to 103; these read DGE and RQ. Residue H136 participates in Mg(2+) binding. D-ribose 5-phosphate-binding positions include D225 and 229 to 233; that span reads NTGKT.

The protein belongs to the ribose-phosphate pyrophosphokinase family. Class I subfamily. As to quaternary structure, homohexamer. Requires Mg(2+) as cofactor.

The protein localises to the cytoplasm. It catalyses the reaction D-ribose 5-phosphate + ATP = 5-phospho-alpha-D-ribose 1-diphosphate + AMP + H(+). It functions in the pathway metabolic intermediate biosynthesis; 5-phospho-alpha-D-ribose 1-diphosphate biosynthesis; 5-phospho-alpha-D-ribose 1-diphosphate from D-ribose 5-phosphate (route I): step 1/1. Involved in the biosynthesis of the central metabolite phospho-alpha-D-ribosyl-1-pyrophosphate (PRPP) via the transfer of pyrophosphoryl group from ATP to 1-hydroxyl of ribose-5-phosphate (Rib-5-P). This chain is Putative ribose-phosphate pyrophosphokinase 2, found in Streptococcus pyogenes serotype M3 (strain SSI-1).